The sequence spans 594 residues: UvrABC system protein C (594 aa).

The GIY-YIG domain occupies D14–I91. Residues D196–M231 form the UVR domain.

Belongs to the UvrC family. Interacts with UvrB in an incision complex.

It localises to the cytoplasm. Its function is as follows. The UvrABC repair system catalyzes the recognition and processing of DNA lesions. UvrC both incises the 5' and 3' sides of the lesion. The N-terminal half is responsible for the 3' incision and the C-terminal half is responsible for the 5' incision. This is UvrABC system protein C from Streptococcus equi subsp. zooepidemicus (strain H70).